The following is a 488-amino-acid chain: Diacylglycerol O-acyltransferase 1 (488 aa).

A disordered region spans residues 1-57; sequence MGDRGSSRRRRTGSRPSSHGGGGPAAAEEEVRDAAAGPDVGAAGDAPAPAPNKDGDA. Topologically, residues 1 to 83 are cytoplasmic; the sequence is MGDRGSSRRR…SLFSSDSGFS (83 aa). Positions 1 to 91 are involved in homomerization; the sequence is MGDRGSSRRR…FSNYRGILNW (91 aa). A phosphoserine mark is found at S17 and S18. Residues 34 to 47 are compositionally biased toward low complexity; that stretch reads AAAGPDVGAAGDAP. The helical transmembrane segment at 84–118 threads the bilayer; the sequence is NYRGILNWCVVMLILSNARLFLENLIKYGILVDPI. The Lumenal segment spans residues 119 to 130; it reads QVVSLFLKDPYS. An extracellular loop 1 (EL1) region spans residues 119–130; that stretch reads QVVSLFLKDPYS. Residues 131–156 traverse the membrane as a helical segment; it reads WPAPCLVIAANVFAVAAFQVEKRLAV. Positions 131–488 are MBOAT fold; that stretch reads WPAPCLVIAA…LNYEAPAAEA (358 aa). Topologically, residues 157–161 are cytoplasmic; sequence GALTE. Residues 162-184 traverse the membrane as a helical segment; that stretch reads QAGLLLHVANLATILCFPAAVVL. Residues 185–191 are Lumenal-facing; that stretch reads LVESITP. Residues 192 to 223 traverse the membrane as a helical segment; sequence VGSLLALMAHTILFLKLFSYRDVNSWCRRARA. The Cytoplasmic segment spans residues 224–273; that stretch reads KAASAGKKASSAAAPHTVSYPDNLTYRDLYYFLFAPTLCYELNFPRSPRI. Residues 224-276 are intracellular loop 1 (IL1); sequence KAASAGKKASSAAAPHTVSYPDNLTYRDLYYFLFAPTLCYELNFPRSPRIRKR. Residues 274-308 form a helical membrane-spanning segment; the sequence is RKRFLLRRILEMLFFTQLQVGLIQQWMVPTIQNSM. At 309–315 the chain is on the lumenal side; that stretch reads KPFKDMD. The helical transmembrane segment at 316–353 threads the bilayer; the sequence is YSRIIERLLKLAVPNHLIWLIFFYWLFHSCLNAVAELM. Residues 354-399 are Cytoplasmic-facing; sequence QFGDREFYRDWWNSESVTYFWQNWNIPVHKWCIRHFYKPMLRRGSS. The interval 354 to 399 is intracellular loop 2 (IL2); that stretch reads QFGDREFYRDWWNSESVTYFWQNWNIPVHKWCIRHFYKPMLRRGSS. An FYXDWWN motif motif is present at residues 360 to 366; sequence FYRDWWN. An acyl-CoA-binding positions include 374-382, Y390, and R404; that span reads WQNWNIPVH. Positions 380-394 are amphipathic helix (AH); it reads PVHKWCIRHFYKPML. The chain crosses the membrane as a helical span at residues 400–420; it reads KWMARTGVFLASAFFHEYLVS. Residue H415 is part of the active site. Topologically, residues 421 to 428 are lumenal; sequence VPLRMFRL. The helical transmembrane segment at 429 to 447 threads the bilayer; sequence WAFTGMMAQIPLAWFVGRF. Residues 448-449 lie on the Cytoplasmic side of the membrane; it reads FQ. Residues 450-481 traverse the membrane as a helical segment; sequence GNYGNAAVWLSLIIGQPIAVLMYVHDYYVLNY. Y477 is an an acyl-CoA binding site. The Lumenal segment spans residues 482–488; sequence EAPAAEA.

It belongs to the membrane-bound acyltransferase family. Sterol o-acyltransferase subfamily. Homodimer or homotetramer; both forms have similar enzymatic activities.

The protein resides in the endoplasmic reticulum membrane. It carries out the reaction an acyl-CoA + a 1,2-diacyl-sn-glycerol = a triacyl-sn-glycerol + CoA. It catalyses the reaction all-trans-retinol + an acyl-CoA = an all-trans-retinyl ester + CoA. The enzyme catalyses 2-(9Z-octadecenoyl)-glycerol + (9Z)-octadecenoyl-CoA = 1,2-di-(9Z-octadecenoyl)-sn-glycerol + CoA. The catalysed reaction is 1,2-di-(9Z-octadecenoyl)-sn-glycerol + (9Z)-octadecenoyl-CoA = 1,2,3-tri-(9Z-octadecenoyl)-glycerol + CoA. It carries out the reaction all-trans-retinol + hexadecanoyl-CoA = all-trans-retinyl hexadecanoate + CoA. It catalyses the reaction 1-O-(9Z-octadecenyl)-glycerol + (9Z)-octadecenoyl-CoA = 1-O-(9Z-octadecyl)-3-(9Z-octadecenoyl)-glycerol + CoA. The enzyme catalyses 1-O-(9Z-octadecyl)-3-(9Z-octadecenoyl)-glycerol + (9Z)-octadecenoyl-CoA = 1-O-(9Z-octadecenyl)-2,3-di-(9Z-octadecenoyl)glycerol + CoA. The catalysed reaction is 1-(9Z-octadecenoyl)-glycerol + (9Z)-octadecenoyl-CoA = 1,2-di-(9Z-octadecenoyl)-glycerol + CoA. It carries out the reaction 1,2-di-(9Z-octadecenoyl)-glycerol + (9Z)-octadecenoate + H(+) = 1,2,3-tri-(9Z-octadecenoyl)-glycerol + H2O. It catalyses the reaction 1-octadecanoyl-2-(5Z,8Z,11Z,14Z-eicosatetraenoyl)-sn-glycerol + (9Z)-octadecenoyl-CoA = 1-octadecanoyl-2-(5Z,8Z,11Z,14Z)-eicosatetraenoyl-3-(9Z)-octadecenoyl-sn-glycerol + CoA. The enzyme catalyses hexadecane-1,2-diol + 2 hexadecanoyl-CoA = 1,2-O,O-dihexadecanoyl-1,2-hexadecanediol + 2 CoA. The catalysed reaction is hexadecane-1,2-diol + hexadecanoyl-CoA = 2-hydroxyhexadecyl hexadecanoate + CoA. It carries out the reaction 2-(9Z-octadecenoyl)-glycerol + hexadecanoyl-CoA = 1-hexadecanoyl-2-(9Z-octadecenoyl)-sn-glycerol + CoA. It catalyses the reaction 1,2-di-(9Z-octadecenoyl)-sn-glycerol + hexadecanoyl-CoA = 1,2-di-(9Z)-octadecenoyl-3-hexadecanoyl-sn-glycerol + CoA. The enzyme catalyses hexadecan-1-ol + hexadecanoyl-CoA = hexadecanyl hexadecanoate + CoA. The catalysed reaction is 13-cis-retinol + hexadecanoyl-CoA = 13-cis-retinyl hexadecanoate + CoA. It carries out the reaction 1,3-di-(9Z-octadecenoyl)-glycerol + (9Z)-octadecenoyl-CoA = 1,2,3-tri-(9Z-octadecenoyl)-glycerol + CoA. It catalyses the reaction 2,3-di-(9Z)-octadecenoyl-sn-glycerol + (9Z)-octadecenoyl-CoA = 1,2,3-tri-(9Z-octadecenoyl)-glycerol + CoA. It functions in the pathway lipid metabolism; glycerolipid metabolism. XP620 is a selective DGAT1 inhibitor. Its function is as follows. Catalyzes the terminal and only committed step in triacylglycerol synthesis by using diacylglycerol and fatty acyl CoA as substrates. Highly expressed in epithelial cells of the small intestine and its activity is essential for the absorption of dietary fats. In liver, plays a role in esterifying exogenous fatty acids to glycerol, and is required to synthesize fat for storage. Also present in female mammary glands, where it produces fat in the milk. May be involved in VLDL (very low density lipoprotein) assembly. In contrast to DGAT2 it is not essential for survival. Functions as the major acyl-CoA retinol acyltransferase (ARAT) in the skin, where it acts to maintain retinoid homeostasis and prevent retinoid toxicity leading to skin and hair disorders. Exhibits additional acyltransferase activities, includin acyl CoA:monoacylglycerol acyltransferase (MGAT), wax monoester and wax diester synthases. Also able to use 1-monoalkylglycerol (1-MAkG) as an acyl acceptor for the synthesis of monoalkyl-monoacylglycerol (MAMAG). This Homo sapiens (Human) protein is Diacylglycerol O-acyltransferase 1.